The following is a 323-amino-acid chain: HPr kinase/phosphorylase (323 aa).

Active-site residues include histidine 142 and lysine 163. 157 to 164 is an ATP binding site; the sequence is GESGVGKS. Serine 164 contacts Mg(2+). Aspartate 181 (proton acceptor; for phosphorylation activity. Proton donor; for dephosphorylation activity) is an active-site residue. The important for the catalytic mechanism of both phosphorylation and dephosphorylation stretch occupies residues 205 to 214; the sequence is LEVRGLGMLN. Glutamate 206 lines the Mg(2+) pocket. Arginine 249 is a catalytic residue. Residues 270–275 form an important for the catalytic mechanism of dephosphorylation region; the sequence is PVAAGR.

Belongs to the HPrK/P family. Homohexamer. It depends on Mg(2+) as a cofactor.

The enzyme catalyses [HPr protein]-L-serine + ATP = [HPr protein]-O-phospho-L-serine + ADP + H(+). It carries out the reaction [HPr protein]-O-phospho-L-serine + phosphate + H(+) = [HPr protein]-L-serine + diphosphate. In terms of biological role, catalyzes the ATP- as well as the pyrophosphate-dependent phosphorylation of a specific serine residue in HPr, a phosphocarrier protein of the phosphoenolpyruvate-dependent sugar phosphotransferase system (PTS). HprK/P also catalyzes the pyrophosphate-producing, inorganic phosphate-dependent dephosphorylation (phosphorolysis) of seryl-phosphorylated HPr (P-Ser-HPr). In Nitrosomonas europaea (strain ATCC 19718 / CIP 103999 / KCTC 2705 / NBRC 14298), this protein is HPr kinase/phosphorylase.